Here is a 343-residue protein sequence, read N- to C-terminus: Protein RecA (343 aa).

Belongs to the RecA family.

The protein resides in the cytoplasm. Its function is as follows. Can catalyze the hydrolysis of ATP in the presence of single-stranded DNA, the ATP-dependent uptake of single-stranded DNA by duplex DNA, and the ATP-dependent hybridization of homologous single-stranded DNAs. It interacts with LexA causing its activation and leading to its autocatalytic cleavage. The protein is Protein RecA of Coxiella burnetii (strain RSA 493 / Nine Mile phase I).